The chain runs to 414 residues: 2,3-diketo-5-methylthiopentyl-1-phosphate enolase (414 aa).

K99 serves as the catalytic Proton acceptor. Residues K148, 174-177 (KDDE), H265, G338, and 360-361 (GG) contribute to the substrate site. The Mg(2+) site is built by K174, D176, and E177. Residue K174 is modified to N6-carboxylysine.

This sequence belongs to the RuBisCO large chain family. Type IV subfamily. Homodimer. It depends on Mg(2+) as a cofactor.

The catalysed reaction is 5-methylsulfanyl-2,3-dioxopentyl phosphate = 2-hydroxy-5-methylsulfanyl-3-oxopent-1-enyl phosphate. It participates in amino-acid biosynthesis; L-methionine biosynthesis via salvage pathway; L-methionine from S-methyl-5-thio-alpha-D-ribose 1-phosphate: step 3/6. In terms of biological role, catalyzes the enolization of 2,3-diketo-5-methylthiopentyl-1-phosphate (DK-MTP-1-P) into 2-hydroxy-3-keto-5-methylthiopentenyl-1-phosphate (HK-MTPenyl-1-P). The chain is 2,3-diketo-5-methylthiopentyl-1-phosphate enolase from Bacillus cereus (strain Q1).